The chain runs to 1085 residues: DNA-directed RNA polymerase subunit beta (1085 aa).

Belongs to the RNA polymerase beta chain family. In plastids the minimal PEP RNA polymerase catalytic core is composed of four subunits: alpha, beta, beta', and beta''. When a (nuclear-encoded) sigma factor is associated with the core the holoenzyme is formed, which can initiate transcription.

The protein localises to the plastid. It localises to the chloroplast. The enzyme catalyses RNA(n) + a ribonucleoside 5'-triphosphate = RNA(n+1) + diphosphate. Functionally, DNA-dependent RNA polymerase catalyzes the transcription of DNA into RNA using the four ribonucleoside triphosphates as substrates. This chain is DNA-directed RNA polymerase subunit beta, found in Physcomitrium patens (Spreading-leaved earth moss).